The following is a 154-amino-acid chain: Terephthalate 1,2-dioxygenase, terminal oxygenase component subunit beta 1 (154 aa).

It belongs to the bacterial ring-hydroxylating dioxygenase beta subunit family. As to quaternary structure, heterotetramer composed of 2 alpha (TphA2I and TphA2II) and 2 beta (TphA3I and TphA3II) subunits. Part of a multicomponent enzyme system composed of a reductase (TphA1I or TphA1II) and a two-subunit oxygenase component (TphA2I or TphA2II and TphA3I or TphA3II). Fe cation is required as a cofactor.

The enzyme catalyses terephthalate + NADH + O2 + H(+) = (3S,4R)-3,4-dihydroxycyclohexa-1,5-diene-1,4-dicarboxylate + NAD(+). Its activity is regulated as follows. Inhibited by EDTA. Functionally, component of the terephthalate 1,2-dioxygenase multicomponent enzyme system which catalyzes the dioxygenation of terephthalate (TER/TPA) to 1,2-dihydroxy-3,5-cyclohexadiene-1,4-dicarboxylic acid (DCD). It can also use 2,5-dicarboxypyridine (PDC) and 1,4-napthalenedicarboxylic acid (NDC) as substrates, and preferentially uses NADPH which is the physiological electron donor. The chain is Terephthalate 1,2-dioxygenase, terminal oxygenase component subunit beta 1 (tphA3I) from Comamonas sp.